Reading from the N-terminus, the 148-residue chain is MLDILVYLYESFRMAELAPDRDALEKRLFAAGFEEAHINATLDWFANLTSSAAHDRLAYAQYRHYAPEELESLNDACREEISYLVGAEILDPESREWVISGLMALAGEDIEPDHVRWMTLIVLWSRGLIEHFTHLEEMLLNHEPGRLH.

It belongs to the Smg family.

The chain is Protein Smg homolog from Thiobacillus denitrificans (strain ATCC 25259 / T1).